The following is a 683-amino-acid chain: MTDTGPLQPDRPDLDRPLSVDAPFEPAGDQPDAIETLVAGFESGAEKQTLLGVTGSGKTNTVSWVLEELQQPTLVLAHNKTLAAQLYEEFRELFPDNAVEYFVSYYDYYQPEAYVEQTDTYIDKDMSINEEIERLRHSATRSLLTRDDVIVVASVSAIYGLGDPANYEEMALRLEAGDERSREDLLSALVELNYERNDVDFQQGTFRVRGDTVEIYPMYGRHAVRVEFWGDEIDRLLKVDIVDGEVVSEEPATLIHPAEHYSVPDRRLETAIEEIEGLLEDRIDYFERQGDLVAAQRIEERTTFDIEMLQETGHCSGIENYSVHMSDRETGEPPYTLLDYFPDGFLTVIDESHQTIPQIKGQFEGDRSRKESLVENGFRLPTAYDNRPLKFEEFEAKTDRTLYVSATPGDYERDHSEQVVEQIVRPTYLVDPDIEVEPAEKQVEDLIERIQATPEDERVLVTTLTKRMAEDLTEYLENAGVDVAYMHDETDTLERHELVRSLRLGEIQVLVGINLLREGLDIPEVSLVAILDADQEGFLRSETTLVQTMGRAARNVEGSVVLYADETTDSMAAAIEETRRRREIQREFNAEHGHEPRTIEKPVSETNLPGSSTDTDGVADVAPDTVDEAEQLIERLETRMQEAADNLEFELAADIRDRIRELRETFDGLEDPNEGVPSPDEEF.

The tract at residues 1–29 is disordered; the sequence is MTDTGPLQPDRPDLDRPLSVDAPFEPAGD. Residues 39–417 form the Helicase ATP-binding domain; the sequence is AGFESGAEKQ…PGDYERDHSE (379 aa). An ATP-binding site is contributed by 52–59; sequence GVTGSGKT. A Beta-hairpin motif is present at residues 105 to 128; sequence YYDYYQPEAYVEQTDTYIDKDMSI. One can recognise a Helicase C-terminal domain in the interval 442–604; the sequence is QVEDLIERIQ…EPRTIEKPVS (163 aa). The segment covering 587–603 has biased composition (basic and acidic residues); it reads EFNAEHGHEPRTIEKPV. The tract at residues 587 to 620 is disordered; the sequence is EFNAEHGHEPRTIEKPVSETNLPGSSTDTDGVAD. Positions 604–615 are enriched in polar residues; the sequence is SETNLPGSSTDT. The region spanning 630–665 is the UVR domain; that stretch reads EQLIERLETRMQEAADNLEFELAADIRDRIRELRET.

This sequence belongs to the UvrB family. As to quaternary structure, forms a heterotetramer with UvrA during the search for lesions. Interacts with UvrC in an incision complex.

It is found in the cytoplasm. In terms of biological role, the UvrABC repair system catalyzes the recognition and processing of DNA lesions. A damage recognition complex composed of 2 UvrA and 2 UvrB subunits scans DNA for abnormalities. Upon binding of the UvrA(2)B(2) complex to a putative damaged site, the DNA wraps around one UvrB monomer. DNA wrap is dependent on ATP binding by UvrB and probably causes local melting of the DNA helix, facilitating insertion of UvrB beta-hairpin between the DNA strands. Then UvrB probes one DNA strand for the presence of a lesion. If a lesion is found the UvrA subunits dissociate and the UvrB-DNA preincision complex is formed. This complex is subsequently bound by UvrC and the second UvrB is released. If no lesion is found, the DNA wraps around the other UvrB subunit that will check the other stand for damage. The sequence is that of UvrABC system protein B from Natronomonas pharaonis (strain ATCC 35678 / DSM 2160 / CIP 103997 / JCM 8858 / NBRC 14720 / NCIMB 2260 / Gabara) (Halobacterium pharaonis).